The following is a 271-amino-acid chain: uncharacterized protein (271 aa).

The protein belongs to the HAD-like hydrolase superfamily.

This is an uncharacterized protein from Staphylococcus aureus (strain NCTC 8325 / PS 47).